Consider the following 346-residue polypeptide: Fe(3+) ions import ATP-binding protein FbpC 2 (346 aa).

The ABC transporter domain maps to 2-234 (LELHRVSKSF…PNSEDIATFL (233 aa)). An ATP-binding site is contributed by 34–41 (GPSGSGKT).

It belongs to the ABC transporter superfamily. Fe(3+) ion importer (TC 3.A.1.10) family. As to quaternary structure, the complex is composed of two ATP-binding proteins (FbpC), two transmembrane proteins (FbpB) and a solute-binding protein (FbpA).

The protein localises to the cell inner membrane. The catalysed reaction is Fe(3+)(out) + ATP + H2O = Fe(3+)(in) + ADP + phosphate + H(+). Part of the ABC transporter complex FbpABC involved in Fe(3+) ions import. Responsible for energy coupling to the transport system. The polypeptide is Fe(3+) ions import ATP-binding protein FbpC 2 (Pectobacterium atrosepticum (strain SCRI 1043 / ATCC BAA-672) (Erwinia carotovora subsp. atroseptica)).